The following is a 151-amino-acid chain: Calmodulin (151 aa).

4 consecutive EF-hand domains span residues 10 to 45 (EQIS…LGQN), 46 to 81 (PTEA…KMKD), 83 to 118 (DSEE…LGEK), and 119 to 151 (LTDE…MLSK). Positions 23, 25, 27, 29, 34, 59, 61, 63, 65, 70, 96, 98, 100, 107, 132, 134, 136, and 143 each coordinate Ca(2+).

The protein belongs to the calmodulin family.

Calmodulin mediates the control of a large number of enzymes, ion channels and other proteins by Ca(2+). Among the enzymes to be stimulated by the calmodulin-Ca(2+) complex are a number of protein kinases and phosphatases. This is Calmodulin from Pneumocystis carinii.